The chain runs to 178 residues: Large ribosomal subunit protein uL5 (178 aa).

This sequence belongs to the universal ribosomal protein uL5 family. In terms of assembly, part of the 50S ribosomal subunit; part of the 5S rRNA/L5/L18/L25 subcomplex. Contacts the 5S rRNA and the P site tRNA. Forms a bridge to the 30S subunit in the 70S ribosome.

This is one of the proteins that bind and probably mediate the attachment of the 5S RNA into the large ribosomal subunit, where it forms part of the central protuberance. In the 70S ribosome it contacts protein S13 of the 30S subunit (bridge B1b), connecting the 2 subunits; this bridge is implicated in subunit movement. Contacts the P site tRNA; the 5S rRNA and some of its associated proteins might help stabilize positioning of ribosome-bound tRNAs. The protein is Large ribosomal subunit protein uL5 of Acinetobacter baumannii (strain AB0057).